An 860-amino-acid chain; its full sequence is Leucine--tRNA ligase (860 aa).

Residues 42–52 (PYPSGRLHMGH) carry the 'HIGH' region motif. The 'KMSKS' region signature appears at 619 to 623 (KMSKS). Residue Lys-622 coordinates ATP.

This sequence belongs to the class-I aminoacyl-tRNA synthetase family.

Its subcellular location is the cytoplasm. It catalyses the reaction tRNA(Leu) + L-leucine + ATP = L-leucyl-tRNA(Leu) + AMP + diphosphate. This is Leucine--tRNA ligase from Salmonella paratyphi B (strain ATCC BAA-1250 / SPB7).